Here is a 729-residue protein sequence, read N- to C-terminus: MSAHNTNESAVGKCPFHEQKEEKSVLARGAGGGTSNRDWWPEQLRVDLLNQHSRRSNPLNEHFNYREEFAKLDYPQLKADLKSLLNDSQEWWPADWGSYIGLFIRMAWHSAGTYRTVDGRGGSGRGQQRFAPLNAWPDNVSLDKARRLLWPVKQKYGQKISWADLYILAGNVALENSGFRTFGFAAGREDVWEPDLDINWGEEKEWLTHRHPESLANAPLGATEMGLIYVNPEGPEASGNPASAAPAIRATFGNMGMNDEEIVALIAGGHTLGKTHGAGEASHVGVDPEAAPLESQGLGWTSSYGSGSGADAITSGLEVIWTQTPTQWSNYFFENLFKYEWVQTHSPAGAIQFEAQDAQASIPDPFDADKKRKPTMLVTDLTLRFDPEFEKISRRFLQDPQSFNEAFARAWFKLTHRDMGPKARYLGPEVPKEDLIWQDPLPAPVHQPSPGEINDVKAQIAQSGLSVSELVSVAWASASTFRGGDKRGGANGARLALAPQKEWPVNAIASRALPQLQAIQQASGKISLADTLVLAGVVGIEQAAAAAGVSIDVPFTPGRVDARQEQTDIDSFDLLQPLADGFRNYRRVTGGPSTETLLIDKAQQLTLSTPELTVLVGGLRVLGTNFDGGKHGVLTEHAGVLSNDFFVNLLDMRTAWRAADDSAELFEGYDRKSGEVRYSATRADLVFGSNAILRASAEVYASADAQQKFITDFVAAWGKVMDLDRFDIR.

Residues 1–33 (MSAHNTNESAVGKCPFHEQKEEKSVLARGAGGG) are disordered. Residues 15 to 25 (PFHEQKEEKSV) are compositionally biased toward basic and acidic residues. The tryptophyl-tyrosyl-methioninium (Trp-Tyr) (with M-255) cross-link spans 108 to 229 (WHSAGTYRTV…LGATEMGLIY (122 aa)). The active-site Proton acceptor is His-109. Positions 229–255 (YVNPEGPEASGNPASAAPAIRATFGNM) form a cross-link, tryptophyl-tyrosyl-methioninium (Tyr-Met) (with W-108). His-270 serves as a coordination point for heme b.

The protein belongs to the peroxidase family. Peroxidase/catalase subfamily. As to quaternary structure, homodimer or homotetramer. Requires heme b as cofactor. Post-translationally, formation of the three residue Trp-Tyr-Met cross-link is important for the catalase, but not the peroxidase activity of the enzyme.

The catalysed reaction is H2O2 + AH2 = A + 2 H2O. It catalyses the reaction 2 H2O2 = O2 + 2 H2O. Functionally, bifunctional enzyme with both catalase and broad-spectrum peroxidase activity. This chain is Catalase-peroxidase, found in Erwinia tasmaniensis (strain DSM 17950 / CFBP 7177 / CIP 109463 / NCPPB 4357 / Et1/99).